The chain runs to 159 residues: Eukaryotic translation initiation factor 5A-2 (159 aa).

The segment covering 1–10 has biased composition (basic and acidic residues); it reads MSDDEHHFEA. The interval 1 to 25 is disordered; sequence MSDDEHHFEASESGASKTYPQSAGN. S2 is subject to Phosphoserine. The span at 13-24 shows a compositional bias: polar residues; that stretch reads SGASKTYPQSAG. The residue at position 51 (K51) is a Hypusine.

This sequence belongs to the eIF-5A family. As to quaternary structure, homodimer. Interacts with AHK4 and AHP1. Cytokinin regulates the formation of the AHP1-AHK4-ELF5A-2 complex. Lys-51 undergoes hypusination, a unique post-translational modification that consists in the addition of a butylamino group from spermidine to lysine side chain, leading to the formation of the unusual amino acid hypusine. eIF-5As are the only known proteins to undergo this modification, which is essential for their function. As to expression, ubiquitous. In roots, expressed mostly inside the stele of the mature zone.

The protein resides in the cytoplasm. The protein localises to the nucleus. Functionally, translation factor that promotes translation elongation and termination, particularly upon ribosome stalling at specific amino acid sequence contexts. Binds between the exit (E) and peptidyl (P) site of the ribosome and promotes rescue of stalled ribosome: specifically required for efficient translation of polyproline-containing peptides as well as other motifs that stall the ribosome. Acts as a ribosome quality control (RQC) cofactor by joining the RQC complex to facilitate peptidyl transfer during CAT tailing step. Regulates cytokinin-mediated root protoxylem specification and represses secifically the expression of AHP6. Regulates the induction of programmed cell death caused by infection with virulent pathogen. This chain is Eukaryotic translation initiation factor 5A-2 (ELF5A-2), found in Arabidopsis thaliana (Mouse-ear cress).